A 99-amino-acid polypeptide reads, in one-letter code: Aspartyl/glutamyl-tRNA(Asn/Gln) amidotransferase subunit C (99 aa).

Belongs to the GatC family. In terms of assembly, heterotrimer of A, B and C subunits.

The catalysed reaction is L-glutamyl-tRNA(Gln) + L-glutamine + ATP + H2O = L-glutaminyl-tRNA(Gln) + L-glutamate + ADP + phosphate + H(+). It catalyses the reaction L-aspartyl-tRNA(Asn) + L-glutamine + ATP + H2O = L-asparaginyl-tRNA(Asn) + L-glutamate + ADP + phosphate + 2 H(+). Functionally, allows the formation of correctly charged Asn-tRNA(Asn) or Gln-tRNA(Gln) through the transamidation of misacylated Asp-tRNA(Asn) or Glu-tRNA(Gln) in organisms which lack either or both of asparaginyl-tRNA or glutaminyl-tRNA synthetases. The reaction takes place in the presence of glutamine and ATP through an activated phospho-Asp-tRNA(Asn) or phospho-Glu-tRNA(Gln). This Burkholderia mallei (strain NCTC 10247) protein is Aspartyl/glutamyl-tRNA(Asn/Gln) amidotransferase subunit C.